Consider the following 137-residue polypeptide: Large ribosomal subunit protein uL16 (137 aa).

It belongs to the universal ribosomal protein uL16 family. In terms of assembly, part of the 50S ribosomal subunit.

Functionally, binds 23S rRNA and is also seen to make contacts with the A and possibly P site tRNAs. The protein is Large ribosomal subunit protein uL16 of Marinomonas sp. (strain MWYL1).